A 43-amino-acid polypeptide reads, in one-letter code: Defensin-A (43 aa).

3 cysteine pairs are disulfide-bonded: Cys3–Cys34, Cys20–Cys39, and Cys24–Cys41.

The protein resides in the secreted. Antibacterial protein. Strong activity against the Gram-positive bacteria M.luteus, B.megaterium and S.aureus. Reduced activity against Gram-positive bacterium B.subtilis and weak activity against Gram-negative bacterium X.japonicus. No detectable activity against the Gram-negative bacteria E.asbriae, E.coli, P.aeruginosa and S.marcescens. This is Defensin-A from Anomala cuprea (Cupreous chafer beetle).